Reading from the N-terminus, the 91-residue chain is Small ribosomal subunit protein uS15 (91 aa).

This sequence belongs to the universal ribosomal protein uS15 family. As to quaternary structure, part of the 30S ribosomal subunit. Forms a bridge to the 50S subunit in the 70S ribosome, contacting the 23S rRNA.

In terms of biological role, one of the primary rRNA binding proteins, it binds directly to 16S rRNA where it helps nucleate assembly of the platform of the 30S subunit by binding and bridging several RNA helices of the 16S rRNA. Functionally, forms an intersubunit bridge (bridge B4) with the 23S rRNA of the 50S subunit in the ribosome. In Legionella pneumophila (strain Paris), this protein is Small ribosomal subunit protein uS15.